A 319-amino-acid chain; its full sequence is Formimidoylglutamase (319 aa).

Mn(2+)-binding residues include His-131, Asp-154, His-156, Asp-158, Cys-248, and Asp-250.

It belongs to the arginase family. Requires Mn(2+) as cofactor.

The catalysed reaction is N-formimidoyl-L-glutamate + H2O = formamide + L-glutamate. The protein operates within amino-acid degradation; L-histidine degradation into L-glutamate; L-glutamate from N-formimidoyl-L-glutamate (hydrolase route): step 1/1. Functionally, catalyzes the conversion of N-formimidoyl-L-glutamate to L-glutamate and formamide. The protein is Formimidoylglutamase of Legionella pneumophila (strain Lens).